We begin with the raw amino-acid sequence, 430 residues long: Putrescine 2-hydroxylase (430 aa).

Residues 88-203 form the Rieske domain; sequence LYVGHQKLVP…LRDCHGLLFE (116 aa). [2Fe-2S] cluster-binding residues include C128, H130, C162, and H165.

It belongs to the bacterial ring-hydroxylating dioxygenase alpha subunit family. [2Fe-2S] cluster is required as a cofactor.

Rieske-type iron sulfur protein that can catalyze in vitro the 2-hydroxylation of putrescine, forming 2-hydroxyputrescine. May be involved in the biosynthesis of the cyclic hydroxamate siderophore alcaligin. The chain is Putrescine 2-hydroxylase from Bordetella bronchiseptica (strain ATCC BAA-588 / NCTC 13252 / RB50) (Alcaligenes bronchisepticus).